The following is a 189-amino-acid chain: Probable nicotinate-nucleotide adenylyltransferase (189 aa).

This sequence belongs to the NadD family.

The catalysed reaction is nicotinate beta-D-ribonucleotide + ATP + H(+) = deamido-NAD(+) + diphosphate. It functions in the pathway cofactor biosynthesis; NAD(+) biosynthesis; deamido-NAD(+) from nicotinate D-ribonucleotide: step 1/1. Its function is as follows. Catalyzes the reversible adenylation of nicotinate mononucleotide (NaMN) to nicotinic acid adenine dinucleotide (NaAD). The sequence is that of Probable nicotinate-nucleotide adenylyltransferase from Bacillus pumilus (strain SAFR-032).